The following is an 87-amino-acid chain: Small ribosomal subunit protein bS16 (87 aa).

This sequence belongs to the bacterial ribosomal protein bS16 family.

The protein is Small ribosomal subunit protein bS16 of Buchnera aphidicola subsp. Baizongia pistaciae (strain Bp).